Here is a 904-residue protein sequence, read N- to C-terminus: Protein argonaute 4A (904 aa).

Disordered regions lie at residues 1 to 33 and 143 to 166; these read MESN…KKLS and KSSA…VRRP. Positions 11–21 are enriched in pro residues; sequence LPPPPPLPPNA. Over residues 144-156 the composition is skewed to low complexity; sequence SSANGGSPGNDSP. In terms of domain architecture, PAZ spans 274-388; it reads PVVDFLLANQ…FPIELCSLVP (115 aa). Residues 557–865 enclose the Piwi domain; it reads FLLCVLAERK…AAAQVSQFIK (309 aa). The disordered stretch occupies residues 871-890; it reads ETSSSHGGHTSAGSAPVPEL. Residues 872-885 are compositionally biased toward low complexity; it reads TSSSHGGHTSAGSA.

The protein belongs to the argonaute family. Ago subfamily.

Probably involved in the RNA silencing pathway. May bind to short RNAs such as microRNAs (miRNAs) or short interfering RNAs (siRNAs), and represses the translation of mRNAs which are complementary to them. This Oryza sativa subsp. japonica (Rice) protein is Protein argonaute 4A (AGO4A).